Reading from the N-terminus, the 481-residue chain is Amino acid permease 6 (481 aa).

Topologically, residues 1–36 (MEKKKSMFVEQSFPEHEIGDTNKNFDEDGRDKRTGT) are cytoplasmic. Transmembrane regions (helical) follow at residues 37–57 (WMTG…LSLA) and 58–78 (WAIA…FSFI). Topologically, residues 79–125 (TYFTSTMLADCYRSPDPVTGKRNYTYMEVVRSYLGGRKVQLCGLAQY) are cytoplasmic. Residues 126–146 (GNLIGITIGYTITASISMVAV) traverse the membrane as a helical segment. Residues 147 to 167 (KRSNCFHKNGHNVKCATSNTP) are Extracellular-facing. Residues 168 to 188 (FMIIFAIIQIILSQIPNFHNL) traverse the membrane as a helical segment. Residues 189–190 (SW) lie on the Cytoplasmic side of the membrane. A helical transmembrane segment spans residues 191–211 (LSILAAVMSFCYASIGVGLSI). The Extracellular segment spans residues 212–242 (AKAAGGGEHVRTTLTGVTVGIDVSGAEKIWR). The helical transmembrane segment at 243–263 (TFQAIGDIAFAYAYSTVLIEI) threads the bilayer. Topologically, residues 264-283 (QDTLKAGPPSENKAMKRASL) are cytoplasmic. Residues 284 to 304 (VGVSTTTFFYMLCGCVGYAAF) form a helical membrane-spanning segment. The Extracellular segment spans residues 305 to 321 (GNDAPGNFLTGFGFYEP). The helical transmembrane segment at 322 to 342 (FWLIDFANVCIAVHLIGAYQV) threads the bilayer. The Cytoplasmic portion of the chain corresponds to 343–385 (FCQPIFQFVESQSAKRWPDNKFITGEYKIHVPCCGDFSINFLR). A helical transmembrane segment spans residues 386–405 (LVWRTSYVVVTAVVAMIFPF). At 406–408 (FND) the chain is on the extracellular side. The helical transmembrane segment at 409–427 (FLGLIGAASFWPLTVYFPI) threads the bilayer. At 428–447 (EMHIAQKKIPKFSFTWTWLK) the chain is on the cytoplasmic side. Residues 448-468 (ILSWTCFIVSLVAAAGSVQGL) form a helical membrane-spanning segment. Over 469–481 (IQSLKDFKPFQAP) the chain is Extracellular.

Belongs to the amino acid/polyamine transporter 2 family. Amino acid/auxin permease (AAAP) (TC 2.A.18.2) subfamily. As to expression, expressed in roots and leaves, and at lower levels in stems and flowers. Found in the xylem parenchyma.

The protein localises to the cell membrane. Its function is as follows. Amino acid-proton symporter. Stereospecific transporter with a broad specificity for tryptophan, proline, and neutral and acidic amino acids. Has an affinity for aspartate in a physiological range. Involved in the uptake of amino acids diffusing out of the xylem tracheids into the xylem parenchyma. This chain is Amino acid permease 6 (AAP6), found in Arabidopsis thaliana (Mouse-ear cress).